Reading from the N-terminus, the 436-residue chain is MTKQPFYKSLYVQVLVAIAIGIALGHWYPETAVAMKPFGDGFVKLIKMAIAPIIFCTVVTGIAGMQSMKSVGKTGGMALLYFEIVSTVALIIGLVVVNLVQPGAGMHVDPNTLDTSKIAAYAAAGEKQSTVDFLMNVIPGTVVGAFANGDILQVLFFSVLFGYALHRLGSYGKPVFEFIERVSHVMFNIINVIMKVAPIGAFGAMAFTIGAYGVGSLVQLGQLMLCFYITCLLFVLIVLGGIARAHGFSILRFIRYIREELLIVLGTSSSESALPRMIDKMEKLGCNKSVVGLVIPTGYSFNLDGTSIYLTMAAVFIAQATDTPMDITHQITLLLVLLIASKGAAGVTGSGFIVLAATLSAVGHLPVAGLALILGIDRFMSEARALTNLVGNGVATVVVSKWCKQLDEGTLQRELAGEGNASSPASDIPVGGREAV.

The next 9 helical transmembrane spans lie at 14-34 (VLVA…TAVA), 45-65 (LIKM…IAGM), 77-97 (MALL…LVVV), 142-162 (VVGA…VLFG), 198-218 (PIGA…GSLV), 223-243 (LMLC…GGIA), 290-310 (VVGL…SIYL), 331-351 (ITLL…TGSG), and 353-373 (IVLA…LALI). A disordered region spans residues 414-436 (ELAGEGNASSPASDIPVGGREAV).

The protein belongs to the dicarboxylate/amino acid:cation symporter (DAACS) (TC 2.A.23) family.

The protein localises to the cell inner membrane. Functionally, responsible for the transport of dicarboxylates such as succinate, fumarate, and malate from the periplasm across the membrane. This chain is C4-dicarboxylate transport protein 2, found in Pseudomonas paraeruginosa (strain DSM 24068 / PA7) (Pseudomonas aeruginosa (strain PA7)).